The primary structure comprises 313 residues: Protein sprouty homolog 1 (313 aa).

Methionine 1 is subject to N-acetylmethionine. A disordered region spans residues 43 to 152 (QIKAIRGSNE…RSDRVIRTQP (110 aa)). The span at 69–79 (PRPEKQERTHE) shows a compositional bias: basic and acidic residues. A compositionally biased stretch (low complexity) spans 106–125 (SRSTSTGSAASSGSSSSVSS). The SPR domain occupies 177–289 (QCGKCKCGEC…CYDWTHRPGC (113 aa)).

The protein belongs to the sprouty family. As to quaternary structure, forms heterodimers with SPRY2. Interacts with TESK1. Interacts with CAV1 (via C-terminus).

It is found in the cytoplasm. The protein localises to the membrane. In terms of biological role, inhibits fibroblast growth factor (FGF)-induced retinal lens fiber differentiation, probably by inhibiting FGF-mediated phosphorylation of ERK1/2. Inhibits TGFB-induced epithelial-to-mesenchymal transition in lens epithelial cells. The sequence is that of Protein sprouty homolog 1 (Spry1) from Mus musculus (Mouse).